The following is a 694-amino-acid chain: DNA ligase (694 aa).

NAD(+) contacts are provided by residues 41-45 (DAEFD), 91-92 (SL), and E121. K123 (N6-AMP-lysine intermediate) is an active-site residue. Residues R144, E184, K300, and K324 each coordinate NAD(+). 4 residues coordinate Zn(2+): C418, C421, C437, and C443. The 88-residue stretch at 607–694 (SVLPTCEGLT…QGPPVQQVVD (88 aa)) folds into the BRCT domain.

This sequence belongs to the NAD-dependent DNA ligase family. LigA subfamily. The cofactor is Mg(2+). It depends on Mn(2+) as a cofactor.

The catalysed reaction is NAD(+) + (deoxyribonucleotide)n-3'-hydroxyl + 5'-phospho-(deoxyribonucleotide)m = (deoxyribonucleotide)n+m + AMP + beta-nicotinamide D-nucleotide.. In terms of biological role, DNA ligase that catalyzes the formation of phosphodiester linkages between 5'-phosphoryl and 3'-hydroxyl groups in double-stranded DNA using NAD as a coenzyme and as the energy source for the reaction. It is essential for DNA replication and repair of damaged DNA. The polypeptide is DNA ligase (Mycobacterium leprae (strain TN)).